Here is a 1085-residue protein sequence, read N- to C-terminus: Extracellular calcium-sensing receptor (1085 aa).

The first 19 residues, 1-19 (MALYSCCWILLAFSTWCTS), serve as a signal peptide directing secretion. The Extracellular portion of the chain corresponds to 20-611 (AYGPDQRAQK…KEIEFLSWTE (592 aa)). A ligand-binding 1 (LB1) region spans residues 23 to 189 (PDQRAQKKGD…QFKSFLRTIP (167 aa)). Cys-61 and Cys-102 are joined by a disulfide. 67–71 (RGFRW) serves as a coordination point for phosphate. Residues Ile-82, Ser-85, Leu-88, and Leu-89 each contribute to the Ca(2+) site. N-linked (GlcNAc...) asparagine glycosylation is present at Asn-91. Position 101 (Thr-101) interacts with Ca(2+). N-linked (GlcNAc...) asparagine glycosylation occurs at Asn-131. Thr-146 contributes to the Ca(2+) binding site. Ser-148, Ala-169, and Ser-171 together coordinate L-tryptophan. Residues Ser-171, Pro-189, Asp-191, Glu-232, and Asp-235 each coordinate Ca(2+). The tract at residues 190–325 (NDEHQATAMA…GGTIGFGLKA (136 aa)) is ligand-binding 2 (LB2). Intrachain disulfides connect Cys-237–Cys-562, Cys-359–Cys-396, Cys-438–Cys-450, Cys-543–Cys-563, Cys-547–Cys-566, Cys-569–Cys-583, and Cys-586–Cys-599. Residues Asp-239 and Ser-241 each coordinate spermine. Asn-262 and Asn-288 each carry an N-linked (GlcNAc...) asparagine glycan. Position 298 (Glu-298) interacts with Ca(2+). Glu-298 provides a ligand contact to L-tryptophan. Asn-401 is a glycosylation site (N-linked (GlcNAc...) asparagine). 416–418 (RIS) contributes to the phosphate binding site. N-linked (GlcNAc...) asparagine glycans are attached at residues Asn-447, Asn-469, and Asn-489. Tyr-490 serves as a coordination point for Ca(2+). N-linked (GlcNAc...) asparagine glycosylation occurs at Asn-542. A cysteine-rich (CR) region spans residues 543-613 (CSRDCLAGTR…IEFLSWTEPF (71 aa)). Gly-558 contacts Ca(2+). Asn-595 carries an N-linked (GlcNAc...) asparagine glycan. A helical transmembrane segment spans residues 612 to 637 (PFGIALTLFAVLGIFLTAFVLGVFIK). Topologically, residues 638–649 (FRNTPIVKATNR) are cytoplasmic. Positions 638 to 649 (FRNTPIVKATNR) are intracellular loop 1 (ICL1). The chain crosses the membrane as a helical span at residues 650-669 (ELSYLLLFSLLCCFSSSLFF). Residues 670 to 675 (IGEPQD) are Extracellular-facing. Residues 676 to 699 (WTCRLRQPAFGISFVLCISCILVK) form a helical membrane-spanning segment. The Cytoplasmic portion of the chain corresponds to 700-723 (TNRVLLVFEAKIPTSFHRKWWGLN). Residues 700–723 (TNRVLLVFEAKIPTSFHRKWWGLN) are intracellular loop 2 (ICL2). The helical transmembrane segment at 724 to 746 (LQFLLVFLCTFMQIVICAIWLNT) threads the bilayer. Topologically, residues 747-770 (APPSSYRNHELEDEIIFITCHEGS) are extracellular. Residues 771-790 (LMALGFLIGYTCLLAAICFF) traverse the membrane as a helical segment. Residues 791 to 806 (FAFKSRKLPENFNEAK) lie on the Cytoplasmic side of the membrane. Residues 791–806 (FAFKSRKLPENFNEAK) form an intracellular loop 3 (ICL3) region. Residues 807–829 (FITFSMLIFFIVWISFIPAYAST) form a helical membrane-spanning segment. Topologically, residues 830-833 (YGKF) are extracellular. Residues 834 to 855 (VSAVEVIAILAASFGLLACIFF) traverse the membrane as a helical segment. The Cytoplasmic segment spans residues 856-1085 (NKVYIILFKP…STVTENMLRS (230 aa)). The interval 856–1085 (NKVYIILFKP…STVTENMLRS (230 aa)) is C-terminus. Residues 881–901 (AFKVAARATLRRSNVSRQRSS) are interaction with RNF19A. At Thr-889 the chain carries Phosphothreonine. Residues 891–899 (RRSNVSRQR) form an arginine-rich retention motif region. Residues Ser-893, Ser-900, and Ser-921 each carry the phosphoserine modification. Residues 893-938 (SNVSRQRSSSLGGSTGSTPSSSISSKSNSEDPFPQQQPKRQKQPQP) are compositionally biased toward low complexity. Disordered regions lie at residues 893–969 (SNVS…PPRC) and 1034–1058 (SQET…EEMS). Residues 950–960 (QPRPPSTPQPQ) show a composition bias toward pro residues. At Ser-1068 the chain carries Phosphoserine.

This sequence belongs to the G-protein coupled receptor 3 family. Homodimer; disulfide-linked. Interacts with VCP. Interacts with ARRB1. Post-translationally, phosphorylation at Thr-889 by PKC impairs coupling with G(q)/G(11) G-proteins, while it does not affect G(i)/G(o)-coupling. Phosphorylation at Ser-893 by PKC and Ser-900 by PKA promote plasma membrane localization. Ubiquitinated by RNF19A; which induces proteasomal degradation.

Its subcellular location is the cell membrane. With respect to regulation, in resting state, adopts an open conformation, anion-binding promoting the inactive configuration. Upon aromatic amino acid-binding, the groove in the extracellular venus flytrap module is closed, thereby inducing the formation of a novel homodimer interface between subunits. Calcium ions stabilize the active state by enhancing homodimer interactions between membrane-proximal domains to fully activate the receptor. Upon activation, the homodimer adopts an asymmetric configuration of the 7-transmembrane region that primes one protomer for G-protein coupling. G-protein binding expands the transmembrane dimer interface; the restriction imposed by the receptor dimer, in combination with intracellular loop 2 (ICL2), enables G-protein activation by facilitating conformational transition of G-protein alpha. Coupling to different classes of G-proteins results in distinct CASR-G-protein interfaces. Its function is as follows. G-protein-coupled receptor that senses changes in the extracellular concentration of calcium ions and plays a key role in maintaining calcium homeostasis. Senses fluctuations in the circulating calcium concentration: activated by elevated circulating calcium, leading to decreased parathyroid hormone (PTH) secretion in parathyroid glands. In kidneys, acts as a key regulator of renal tubular calcium resorption. Ligand binding causes a conformation change that triggers signaling via guanine nucleotide-binding proteins (G-proteins) and modulates the activity of downstream effectors. CASR is coupled with different G(q)/G(11), G(i)/G(o)- or G(s)-classes of G-proteins depending on the context. In the parathyroid and kidney, CASR signals through G(q)/G(11) and G(i)/G(o) G-proteins: G(q)/G(11) coupling activates phospholipase C-beta, releasing diacylglycerol (DAG) and inositol 1,4,5-trisphosphate (IP3) second messengers, while G(i)/G(o) coupling mediates inhibition of adenylate cyclase activity. The G-protein-coupled receptor activity is activated by a co-agonist mechanism: aromatic amino acids, such as Trp or Phe, act concertedly with divalent cations, such as calcium or magnesium, to achieve full receptor activation. Acts as an activator of the NLRP3 inflammasome via G(i)/G(o)-mediated signaling: down-regulation of cyclic AMP (cAMP) relieving NLRP3 inhibition by cAMP. Acts as a regulator of proton-sensing receptor GPR68 in a seesaw manner: CASR-mediated signaling inhibits GPR68 signaling in response to extracellular calcium, while GPR68 inhibits CASR in presence of extracellular protons. This Bos taurus (Bovine) protein is Extracellular calcium-sensing receptor (CASR).